A 627-amino-acid polypeptide reads, in one-letter code: Putative polyketide hydroxylase (627 aa).

Residues 22-51 (PVLV…LVER) and 309-319 (YRSGRVLLAGD) contribute to the FAD site. Positions 370 to 469 (AEATSARAAH…GGGPGGGGPQ (100 aa)) are disordered. The segment covering 395–469 (AGGGGPGAGT…GGGPGGGGPQ (75 aa)) has biased composition (gly residues).

The protein belongs to the PheA/TfdB FAD monooxygenase family. Requires FAD as cofactor.

Involved in developmentally regulated synthesis of a compound biosynthetically related to polyketide antibiotics which is essential for spore color in Streptococcus coelicolor. The sequence is that of Putative polyketide hydroxylase from Streptomyces coelicolor (strain ATCC BAA-471 / A3(2) / M145).